A 298-amino-acid polypeptide reads, in one-letter code: ADP/ATP translocase 3 (298 aa).

The residue at position 1 (Met-1) is an N-acetylmethionine. Residues 1 to 7 (MTEQAIS) lie on the Mitochondrial intermembrane side of the membrane. Thr-2 carries the N-acetylthreonine; in ADP/ATP translocase 3, N-terminally processed modification. A Solcar 1 repeat occupies 6–98 (ISFAKDFLAG…FAFKDKYKQI (93 aa)). A helical membrane pass occupies residues 8 to 37 (FAKDFLAGGIAAAISKTAVAPIERVKLLLQ). Over 38–74 (VQHASKQIAADKQYKGIVDCIVRIPKEQGVLSFWRGN) the chain is Mitochondrial matrix. N6,N6,N6-trimethyllysine is present on Lys-52. A helical transmembrane segment spans residues 75–99 (LANVIRYFPTQALNFAFKDKYKQIF). Positions 80 and 92 each coordinate ADP. The Mitochondrial intermembrane segment spans residues 100-109 (LGGVDKHTQF). Lys-105 carries the post-translational modification N6-acetyllysine. A helical transmembrane segment spans residues 110–130 (WRYFAGNLASGGAAGATSLCF). Solcar repeat units follow at residues 111-201 (RYFA…AKGM) and 212-297 (VSWM…LKKV). The Mitochondrial matrix segment spans residues 131-178 (VYPLDFARTRLAADVGKSATEREFKGLGDCLVKITKSDGIRGLYQGFN). A helical membrane pass occupies residues 179 to 199 (VSVQGIIIYRAAYFGVYGTAK). The Mitochondrial intermembrane portion of the chain corresponds to 200-210 (GMLPDPRNTHI). Residues 211–231 (VVSWMIAQTVTAVAGVFSYPF) traverse the membrane as a helical segment. The Mitochondrial matrix portion of the chain corresponds to 232–273 (DTVRRRMMMQSGRKGADIMYKGTLDCWRKIFKDEGGKAFFKG). Position 235 (Arg-235) interacts with ADP. Residues 235–240 (RRRMMM) are important for transport activity. A Nucleotide carrier signature motif motif is present at residues 235-240 (RRRMMM). An N6-acetyllysine modification is found at Lys-268. The chain crosses the membrane as a helical span at residues 274 to 291 (AWSNVLRGMGGAFVLVLY). Residues 292–298 (DELKKVI) lie on the Mitochondrial intermembrane side of the membrane.

Belongs to the mitochondrial carrier (TC 2.A.29) family. As to quaternary structure, monomer. Found in a complex with ARL2, ARL2BP and SLC25A6/ANT3. In terms of processing, trimethylated by ANTKMT at Lys-52.

Its subcellular location is the mitochondrion inner membrane. It localises to the membrane. It carries out the reaction ADP(in) + ATP(out) = ADP(out) + ATP(in). The enzyme catalyses H(+)(in) = H(+)(out). Its activity is regulated as follows. The matrix-open state (m-state) is inhibited by the membrane-permeable bongkrekic acid (BKA). The cytoplasmic-open state (c-state) is inhibited by the membrane-impermeable toxic inhibitor carboxyatractyloside (CATR). Proton transporter activity is inhibited by ADP:ATP antiporter activity. Functionally, ADP:ATP antiporter that mediates import of ADP into the mitochondrial matrix for ATP synthesis, and export of ATP out to fuel the cell. Cycles between the cytoplasmic-open state (c-state) and the matrix-open state (m-state): operates by the alternating access mechanism with a single substrate-binding site intermittently exposed to either the cytosolic (c-state) or matrix (m-state) side of the inner mitochondrial membrane. In addition to its ADP:ATP antiporter activity, also involved in mitochondrial uncoupling and mitochondrial permeability transition pore (mPTP) activity. Plays a role in mitochondrial uncoupling by acting as a proton transporter: proton transport uncouples the proton flows via the electron transport chain and ATP synthase to reduce the efficiency of ATP production and cause mitochondrial thermogenesis. Proton transporter activity is inhibited by ADP:ATP antiporter activity, suggesting that SLC25A6/ANT3 acts as a master regulator of mitochondrial energy output by maintaining a delicate balance between ATP production (ADP:ATP antiporter activity) and thermogenesis (proton transporter activity). Proton transporter activity requires free fatty acids as cofactor, but does not transport it. Also plays a key role in mPTP opening, a non-specific pore that enables free passage of the mitochondrial membranes to solutes of up to 1.5 kDa, and which contributes to cell death. It is however unclear if SLC25A6/ANT3 constitutes a pore-forming component of mPTP or regulates it. The polypeptide is ADP/ATP translocase 3 (Sus scrofa (Pig)).